A 269-amino-acid polypeptide reads, in one-letter code: Phosphate import ATP-binding protein PstB (269 aa).

One can recognise an ABC transporter domain in the interval 21 to 264; sequence SEVRNLSFYY…PKNKQTEDYI (244 aa). 53–60 contributes to the ATP binding site; sequence GPSGCGKS.

Belongs to the ABC transporter superfamily. Phosphate importer (TC 3.A.1.7) family. The complex is composed of two ATP-binding proteins (PstB), two transmembrane proteins (PstC and PstA) and a solute-binding protein (PstS).

It is found in the cell inner membrane. It catalyses the reaction phosphate(out) + ATP + H2O = ADP + 2 phosphate(in) + H(+). Functionally, part of the ABC transporter complex PstSACB involved in phosphate import. Responsible for energy coupling to the transport system. The protein is Phosphate import ATP-binding protein PstB of Nitrosospira multiformis (strain ATCC 25196 / NCIMB 11849 / C 71).